Consider the following 546-residue polypeptide: Apolipoprotein N-acyltransferase 1 (546 aa).

Transmembrane regions (helical) follow at residues F14–P34, A41–V61, F62–F82, V85–L105, L122–V142, L151–F171, and F194–F214. In terms of domain architecture, CN hydrolase spans A233 to I502. Residue E280 is the Proton acceptor of the active site. The active site involves K361. Catalysis depends on C413, which acts as the Nucleophile. A helical membrane pass occupies residues G514 to V534.

The protein belongs to the CN hydrolase family. Apolipoprotein N-acyltransferase subfamily.

The protein resides in the cell inner membrane. The enzyme catalyses N-terminal S-1,2-diacyl-sn-glyceryl-L-cysteinyl-[lipoprotein] + a glycerophospholipid = N-acyl-S-1,2-diacyl-sn-glyceryl-L-cysteinyl-[lipoprotein] + a 2-acyl-sn-glycero-3-phospholipid + H(+). Its pathway is protein modification; lipoprotein biosynthesis (N-acyl transfer). Its function is as follows. Catalyzes the phospholipid dependent N-acylation of the N-terminal cysteine of apolipoprotein, the last step in lipoprotein maturation. In Treponema pallidum (strain Nichols), this protein is Apolipoprotein N-acyltransferase 1.